Here is a 101-residue protein sequence, read N- to C-terminus: Small ribosomal subunit protein bS18c (101 aa).

Over residues M1 to L19 the composition is skewed to basic residues. A disordered region spans residues M1 to G23.

The protein belongs to the bacterial ribosomal protein bS18 family. As to quaternary structure, part of the 30S ribosomal subunit.

Its subcellular location is the plastid. The protein resides in the chloroplast. This is Small ribosomal subunit protein bS18c from Lemna minor (Common duckweed).